The primary structure comprises 125 residues: Glycine cleavage system H protein (125 aa).

A Lipoyl-binding domain is found at 21–103 (SVTIGISNQA…YSAGWIVKIK (83 aa)). Position 62 is an N6-lipoyllysine (Lys62).

The protein belongs to the GcvH family. As to quaternary structure, the glycine cleavage system is composed of four proteins: P, T, L and H. (R)-lipoate serves as cofactor.

The glycine cleavage system catalyzes the degradation of glycine. The H protein shuttles the methylamine group of glycine from the P protein to the T protein. The protein is Glycine cleavage system H protein of Psychromonas ingrahamii (strain DSM 17664 / CCUG 51855 / 37).